A 101-amino-acid chain; its full sequence is Small ribosomal subunit protein uS14 (101 aa).

The disordered stretch occupies residues 1 to 24 (MAKVSSIKKNEKRKKLSQSLHNKR). Over residues 10–24 (NEKRKKLSQSLHNKR) the composition is skewed to basic residues.

Belongs to the universal ribosomal protein uS14 family. In terms of assembly, part of the 30S ribosomal subunit. Contacts proteins S3 and S10.

Binds 16S rRNA, required for the assembly of 30S particles and may also be responsible for determining the conformation of the 16S rRNA at the A site. This Rickettsia bellii (strain OSU 85-389) protein is Small ribosomal subunit protein uS14.